A 135-amino-acid chain; its full sequence is Beta/delta-urticatoxin-Ui2a (135 aa).

Positions 1–18 are cleaved as a signal peptide; it reads MGAIVLVAIMALVASSSA. Residues 19 to 72 constitute a propeptide that is removed on maturation; the sequence is FSDDEQNMMNAEGEKGIRSYSAADDVSDMIESLFVNSGNRNLVLMMLSGRPQPN. 6 disulfides stabilise this stretch: cysteine 75–cysteine 92, cysteine 82–cysteine 97, cysteine 91–cysteine 105, cysteine 107–cysteine 121, cysteine 114–cysteine 126, and cysteine 120–cysteine 134.

This sequence belongs to the urticatoxin-2 family. In terms of tissue distribution, expressed in trichomes, that are stiff epidermal hairs located on the surface of petioles and leaves.

The protein localises to the secreted. In terms of biological role, plant defense neurotoxin that causes pain and systemic symptoms in mammals via modulation of voltage-gated sodium channels (Nav). Potent modulator of human Nav1.5/SCN5A (EC(50)=55 nM), Nav1.6/SCN8A (EC(50)=0.86 nM), and Nav1.7/SCN9A (EC(50)=208 nM), where it shifts the activation threshold to more negative potentials and delays fast inactivation. Also shifts the voltage-dependence of steady-state fast inactivation of Nav1.6/SCN8A, but not that of Nav1.5/SCN5A or Nav1.7/SCN9A. On Nav1.7/SCN9A, principally acts by binding to extracellular loops of domain IV (Nav site 3). In vivo, intraplantar injection into mice causes numerous dose-dependent, immediate, and long-lasting spontaneous pain behaviors, while no swelling is observed in the injected paw. At the highest doses tested, systemic symptoms including hypokinesia and hypersalivation are observed. The polypeptide is Beta/delta-urticatoxin-Ui2a (Urtica incisa (Scrub nettle)).